The sequence spans 603 residues: Grainyhead-like protein 3 homolog (603 aa).

The segment at 30–95 (EAWKTYLENP…QGKKFYHSMD (66 aa)) is transcription activation. In terms of domain architecture, Grh/CP2 DB spans 226-461 (GLKSDFEYTL…DLETQPVLFI (236 aa)).

It belongs to the grh/CP2 family. Grainyhead subfamily. Homodimer, also forms heterodimers with GRHL1 and GRHL2. Interacts with LMO4.

It localises to the nucleus. Transcription factor playing important roles in primary neurulation and in the differentiation of stratified epithelia of both ectodermal and endodermal origin. Binds directly to the consensus DNA sequence 5'-AACCGGTT-3' acting as an activator and repressor on distinct target genes. Essential for epidermal differentiation and barrier formation at the end of embryogenesis with TGM3 as critical direct target. Exhibits functional redundancy with GRHL2 in epidermal morphogenetic events such as eyelid fusion and epidermal wound repair. Despite being dispensable during normal epidermal homeostasis in the adulthood, is again required for barrier repair after immune-mediated epidermal damage, regulates distinct gene batteries in embryonic epidermal differentiation and adult epidermal barrier reformation after injury. Plays unique and cooperative roles with GRHL2 in establishing distinct zones of primary neurulation. Essential for spinal closure, functions cooperatively with GRHL2 in closure 2 (forebrain/midbrain boundary) and posterior neuropore closure. Also required for proper development of the oral periderm. No genetic interaction with GRHL1, no functional cooperativity due to diverse target gene selectivity. The sequence is that of Grainyhead-like protein 3 homolog from Mus musculus (Mouse).